Reading from the N-terminus, the 161-residue chain is UPF0178 protein Rsph17025_3122 (161 aa).

It belongs to the UPF0178 family.

The protein is UPF0178 protein Rsph17025_3122 of Cereibacter sphaeroides (strain ATCC 17025 / ATH 2.4.3) (Rhodobacter sphaeroides).